The primary structure comprises 897 residues: Macoilin (897 aa).

The next 4 helical transmembrane spans lie at 113 to 133, 157 to 177, 181 to 201, and 204 to 224; these read ICYLFIPIRMLIFLATTYVWI, QSWPIVFITCFIVIFELFLRI, PILISFFPNVAEYAGVSPVWP, and LNAFFGAHSIGYPVILITVSM. 2 stretches are compositionally biased toward polar residues: residues 291–304 and 329–338; these read IQAASATPPTSSKK and GNSGFNSTPP. The interval 291-375 is disordered; that stretch reads IQAASATPPT…DTSSSTIEDQ (85 aa). Residues 351–361 show a composition bias toward acidic residues; the sequence is DMDDGDDSDDD. A helical membrane pass occupies residues 379-399; the sequence is GGISIIRFIFSSAAWLFSFVF. The segment covering 403–413 has biased composition (polar residues); that stretch reads TPSENSLSNQQ. Disordered stretches follow at residues 403–535 and 724–770; these read TPSE…QEED and NGSS…SPVP. The span at 414 to 424 shows a compositional bias: acidic residues; it reads IDDDEDYEDGD. Residues 432-451 are compositionally biased toward polar residues; it reads TDSMTSTTKGRANTMPSTTR. Composition is skewed to low complexity over residues 452–467 and 475–490; these read SQNNNNSQKQQKQSNG and SHQNNHQKSNGNSNGH. Residues 503 to 726 are a coiled coil; that stretch reads DTNASNETDI…VQEFQIKNGS (224 aa). The span at 510-535 shows a compositional bias: basic and acidic residues; it reads TDIRSMSRELESLRSEISSRRSQEED. Residues 734 to 761 are compositionally biased toward polar residues; it reads ETLMNGRSSTEANNENDTTASDQSSPHQ.

In terms of tissue distribution, strong expression in many neurons, very weak expression is also detected in others tissues.

The protein localises to the rough endoplasmic reticulum membrane. The protein resides in the nucleus membrane. Its function is as follows. Plays a role in the regulation of neuronal activity. In AWA and AWC neurons, plays a role in regulating olfactory adaptation by controlling the forgetting sensory responses to odorants such as diacetyl and isoamyl alcohol. May play a role in regulating daf-7 expression in ASI neurons in response to bacterial small RNAs. In ASI neurons, promotes dauer formation in response to pheromones such as the ascarosides ascr#2 and ascr#3. The polypeptide is Macoilin (Caenorhabditis elegans).